Consider the following 330-residue polypeptide: MDSLINEIKSAQSSAELEELRIKALGKKGILTAQFALLKNLDEEEKKEKAKELNQLKGEFEREWTLKKEIIATEELHKKLLEEKVDMTLFAPSKGVGSAHPVMITMERIVDYFVSLNFAIKSGPLIEDDFHNFEALNLPKYHPARDMQDTFYFKDGMLLRTHTSPVQIRTMEKETPPIRMICPGAVFRRDYDLTHTPMFHQVEGLVVEEEGKVSFANLKYILEDFLRFMFGEVQVRFRTSFFPFTEPSAEVDISCIFCHGEGCRVCSHTGWLEVLGCGLVDENVFKAVGYKNVSGYAFGLGVERFAMLIHAVSDLRAFFESDLRVLEQFR.

Glu-246 contributes to the Mg(2+) binding site.

The protein belongs to the class-II aminoacyl-tRNA synthetase family. Phe-tRNA synthetase alpha subunit type 1 subfamily. Tetramer of two alpha and two beta subunits. It depends on Mg(2+) as a cofactor.

The protein localises to the cytoplasm. The catalysed reaction is tRNA(Phe) + L-phenylalanine + ATP = L-phenylalanyl-tRNA(Phe) + AMP + diphosphate + H(+). The chain is Phenylalanine--tRNA ligase alpha subunit from Wolinella succinogenes (strain ATCC 29543 / DSM 1740 / CCUG 13145 / JCM 31913 / LMG 7466 / NCTC 11488 / FDC 602W) (Vibrio succinogenes).